Reading from the N-terminus, the 760-residue chain is Protein HEADING DATE 3B (760 aa).

Composition is skewed to gly residues over residues 1-12 (MATRGGGGGGGG) and 60-70 (SGGGGGGGVGG). Disordered stretches follow at residues 1–120 (MATR…KINK), 144–169 (SRST…RLAD), 236–262 (VKSR…EKSS), and 285–346 (TGII…IEET). Over residues 71–87 (SPAHSTSAASQSQSQSQ) the composition is skewed to low complexity. Over residues 94 to 107 (SLFQPFNVPSNRPG) the composition is skewed to polar residues. The segment covering 108 to 120 (HSTEKINSDKINK) has biased composition (basic and acidic residues). The segment covering 236 to 248 (VKSRTPLKDKEME) has biased composition (basic and acidic residues). Residues 349-355 (KRKRLLE) carry the Nuclear localization signal motif. Disordered stretches follow at residues 485–543 (LQQP…GVQL) and 707–760 (FPTV…QRDD). Composition is skewed to polar residues over residues 511–522 (QRDQAATNGVSK), 531–543 (ASDN…GVQL), and 707–730 (FPTV…QTNV).

As to expression, expressed in mesophyll cells of young leaves, anthers, stigmas and the top of lemmas.

Its subcellular location is the nucleus. Involved in the regulation of flowering time under short day (SD) and long day (LD) conditions. Functions as a floral promoter by negatively regulating GHD7, a repressor of the photoperiodic control of flowering. Acts as a floral activator in the LD photoperiodic pathway. Involved in blue light-induced activation of EHD1 expression to promote flowering under SD conditions. The sequence is that of Protein HEADING DATE 3B (HD3B) from Oryza sativa subsp. japonica (Rice).